Here is a 379-residue protein sequence, read N- to C-terminus: Putative acetyl-CoA C-acetyltransferase VraB (379 aa).

Catalysis depends on Cys86, which acts as the Acyl-thioester intermediate. The active-site Proton acceptor is the His338.

It belongs to the thiolase-like superfamily. Thiolase family.

This Staphylococcus aureus (strain MRSA252) protein is Putative acetyl-CoA C-acetyltransferase VraB (vraB).